A 661-amino-acid chain; its full sequence is Meiotic coiled-coil protein 1 (661 aa).

Coiled coils occupy residues 38 to 78 (LDAL…IIEE), 100 to 121 (RAIY…ERLS), 143 to 184 (DIKL…LSIK), 304 to 320 (ELIQ…EVDL), and 360 to 387 (LKRL…DNEK). 3 disordered regions span residues 410-446 (QNQE…LRNI), 467-562 (LIDR…TPAS), and 573-592 (LSRT…TPTQ). The segment covering 414–430 (NISSNDNSKSSPESSPP) has biased composition (low complexity). Residues 436-445 (GKIENKKLRN) show a composition bias toward basic and acidic residues. Composition is skewed to polar residues over residues 472–481 (VNQSPDTRSV), 548–562 (HNSV…TPAS), and 582–592 (FTNSLDDTPTQ).

This chain is Meiotic coiled-coil protein 1 (mcp1), found in Schizosaccharomyces pombe (strain 972 / ATCC 24843) (Fission yeast).